A 71-amino-acid chain; its full sequence is Delta-actitoxin-Avd2b 4 (71 aa).

The signal sequence occupies residues 1 to 20 (MMNRLLVFLMLGAFMLVVSA). Residues 21 to 41 (NDAYGDEPAFKDLNQGDESLG) constitute a propeptide that is removed on maturation. 3 disulfides stabilise this stretch: Cys46-Cys61, Cys47-Cys55, and Cys49-Cys66.

Belongs to the sea anemone short toxin (type III) family.

It is found in the secreted. Its subcellular location is the nematocyst. Voltage-gated sodium channel (Nav) inhibitor. 1 uM completely inhibits insect voltage-gated sodium channel inactivation (DmNav1 from D.melanogaster). The protein is Delta-actitoxin-Avd2b 4 of Anemonia viridis (Snakelocks anemone).